Consider the following 118-residue polypeptide: Non-specific lipid-transfer protein (118 aa).

The N-terminal stretch at 1–27 is a signal peptide; sequence MGVSKVAIAVAVMLMVVVINHPAVVEG. 4 disulfide bridges follow: Cys30–Cys75, Cys40–Cys54, Cys55–Cys100, and Cys77–Cys114.

Belongs to the plant LTP family. Post-translationally, disulfide bonds.

In terms of biological role, plant non-specific lipid-transfer proteins transfer phospholipids as well as galactolipids across membranes. May play a role in wax or cutin deposition in the cell walls of expanding epidermal cells and certain secretory tissues. The sequence is that of Non-specific lipid-transfer protein from Apium graveolens (Celery).